A 557-amino-acid polypeptide reads, in one-letter code: Myo-inositol transporter 2 (557 aa).

The Cytoplasmic portion of the chain corresponds to 1 to 76; that stretch reads MDFNNIPLAT…ENGEGFEAEK (76 aa). Residues 24–69 form a disordered region; sequence EMTTRPSETKKKVPFSEDMREIPSLPNEEEANATDPQANEVADENG. A compositionally biased stretch (basic and acidic residues) spans 30-44; that stretch reads SETKKKVPFSEDMRE. The chain crosses the membrane as a helical span at residues 77-97; sequence ISSWIWVLSAVAGISGLLFGY. Residues 98–99 are Extracellular-facing; the sequence is DT. A helical membrane pass occupies residues 100–120; the sequence is GVISGALAVLGSDLGHVLSSG. At 121 to 123 the chain is on the cytoplasmic side; it reads QKE. Residues 124-144 traverse the membrane as a helical segment; that stretch reads LITSATSFAALISATTSGWLA. The Extracellular portion of the chain corresponds to 145-157; it reads DWVGRKRLLLCAD. A helical transmembrane segment spans residues 158–178; that stretch reads AIFVIGSVIMAASRNVAMMVV. Residues 179-180 are Cytoplasmic-facing; that stretch reads GR. A helical membrane pass occupies residues 181–201; it reads FIVGYGIGLTSLIVPMYITEL. Residues 202-209 are Extracellular-facing; the sequence is APARLRGR. Residues 210 to 230 form a helical membrane-spanning segment; the sequence is LVIIYVVFITGGQLIAYSLNA. Residues 231-240 lie on the Cytoplasmic side of the membrane; it reads AFEHVHQGWR. A helical transmembrane segment spans residues 241 to 261; that stretch reads IMFGIGAAPALGQLISLFWTP. At 262-367 the chain is on the extracellular side; sequence ESPRYLLRHN…IFQSVGFKNS (106 aa). Residues 368 to 388 form a helical membrane-spanning segment; it reads ISVSIVVGATNFVFTIVAFMF. Topologically, residues 389 to 396 are cytoplasmic; it reads IDRIGRRR. Residues 397 to 417 traverse the membrane as a helical segment; sequence ILLCTSAVMIAGLALCAIAYH. The Extracellular portion of the chain corresponds to 418–432; the sequence is FLPADTTQNTNSGWQ. The helical transmembrane segment at 433-453 threads the bilayer; the sequence is YVVLASIIIFLASYASGIGNI. Residues 454-468 lie on the Cytoplasmic side of the membrane; it reads PWQQAELFPMEVRAL. The chain crosses the membrane as a helical span at residues 469–489; sequence GAGFSTAINWVGNLIISASFL. At 490-498 the chain is on the extracellular side; sequence TMMESITPT. A helical membrane pass occupies residues 499–519; that stretch reads GTFALFAGFCFVGLVTSYFTY. Topologically, residues 520–557 are cytoplasmic; that stretch reads PELAGMSIENIHKLLEKGFWQAVKESTKRVRKGRIDEA.

It belongs to the major facilitator superfamily. Sugar transporter (TC 2.A.1.1) family.

It localises to the membrane. The catalysed reaction is myo-inositol(out) + H(+)(out) = myo-inositol(in) + H(+)(in). Transporter for myo-inositol. The protein is Myo-inositol transporter 2 (itr2) of Schizosaccharomyces pombe (strain 972 / ATCC 24843) (Fission yeast).